The sequence spans 262 residues: Histone chaperone cia1 (262 aa).

Positions 157–262 (IQWDNPDFDD…KPEEKPETSQ (106 aa)) are disordered. 2 coiled-coil regions span residues 173 to 196 (DADEEEEEEEADEMEEEFDEEGEG) and 223 to 253 (KGSEEEEEEEIDIEEEEEESALANASAAEEK). 2 stretches are compositionally biased toward acidic residues: residues 173-219 (DADE…GEGE) and 226-242 (EEEEEEEIDIEEEEEES). Positions 250-262 (AEEKPEEKPETSQ) are enriched in basic and acidic residues.

The protein belongs to the ASF1 family. Interacts with histone H3 and histone H4.

It localises to the nucleus. Its function is as follows. Histone chaperone that facilitates histone deposition and histone exchange and removal during nucleosome assembly and disassembly. This chain is Histone chaperone cia1 (cia1), found in Schizosaccharomyces pombe (strain 972 / ATCC 24843) (Fission yeast).